The following is a 174-amino-acid chain: N5-carboxyaminoimidazole ribonucleotide mutase (174 aa).

Residues Ser-16, Asp-19, and Arg-46 each contribute to the substrate site.

The protein belongs to the AIR carboxylase family. Class I subfamily.

It catalyses the reaction 5-carboxyamino-1-(5-phospho-D-ribosyl)imidazole + H(+) = 5-amino-1-(5-phospho-D-ribosyl)imidazole-4-carboxylate. It participates in purine metabolism; IMP biosynthesis via de novo pathway; 5-amino-1-(5-phospho-D-ribosyl)imidazole-4-carboxylate from 5-amino-1-(5-phospho-D-ribosyl)imidazole (N5-CAIR route): step 2/2. Functionally, catalyzes the conversion of N5-carboxyaminoimidazole ribonucleotide (N5-CAIR) to 4-carboxy-5-aminoimidazole ribonucleotide (CAIR). This chain is N5-carboxyaminoimidazole ribonucleotide mutase, found in Mycobacterium tuberculosis (strain CDC 1551 / Oshkosh).